Here is a 622-residue protein sequence, read N- to C-terminus: Neuronal acetylcholine receptor subunit alpha-4 (622 aa).

The first 23 residues, 1-23 (MGFLVSKGNLLLLLCASIFPAFG), serve as a signal peptide directing secretion. Topologically, residues 24–237 (HVETRAHAEE…ITYSFIIRRL (214 aa)) are extracellular. A glycan (N-linked (GlcNAc...) asparagine) is linked at Asn-52. Residues Val-71 and Glu-73 each coordinate Ca(2+). Residue Asn-102 is glycosylated (N-linked (GlcNAc...) asparagine). 2 disulfide bridges follow: Cys-156-Cys-170 and Cys-220-Cys-221. The helical transmembrane segment at 238-262 (PLFYTINLIIPCLLISCLTVLVFYL) threads the bilayer. Cys-266 carries S-palmitoyl cysteine lipidation. 2 helical membrane-spanning segments follow: residues 270–288 (ITLCISVLLSLTVFLLLIT) and 304–325 (YLLFTMIFVTLSIIITVFVLNV). Residues 326-595 (HHRSPRTHTM…WKYVAMVIDR (270 aa)) lie on the Cytoplasmic side of the membrane. Disordered regions lie at residues 380 to 477 (WSET…TEEG) and 497 to 516 (QTNGHSSASPASQRCHLNEE). Over residues 390–407 (TTSSSPSPQSNEPSPTSS) the composition is skewed to low complexity. Composition is skewed to polar residues over residues 450-472 (SDTQTTSISKGRSLSVQQMYSPN) and 497-508 (QTNGHSSASPAS). A helical transmembrane segment spans residues 596 to 614 (IFLWMFIIVCLLGTVGLFL).

This sequence belongs to the ligand-gated ion channel (TC 1.A.9) family. Acetylcholine receptor (TC 1.A.9.1) subfamily. Alpha-4/CHRNA4 sub-subfamily. As to quaternary structure, neuronal AChR is composed of two different types of subunits: alpha and beta. CHRNA4 forms heteropentameric neuronal acetylcholine receptors with CHRNB2 and CHRNB4, as well as CHRNA5 and CHRNB3 as accesory subunits. Found in two major stoichiometric forms, LS (low agonist sensitivity): (CHRNA4)3:(CHRNB2)2 and HS (high agonist sensitivity): (CHRNA4)2:(CHRNB2)3, the two stoichiometric forms differ in their unitary conductance, calcium permeability, ACh sensitivity and potentiation by divalent cation. Cells produce predominantly an (CHRNA4)3:(CHRNB2)2 nAChR. The (CHRNA4)2:(CHRNB2)3 expression is selectively up-regulated by nicotine and has lower single channel conductance and calcium permeability. In the striatum, also forms CHRNA4:CHRNA6:CHRNB2 complexes. Also found in the stoichiometric form: (CHRNA4:CHRNB2)2:CHRNB3.

It localises to the synaptic cell membrane. It is found in the cell membrane. The enzyme catalyses Ca(2+)(in) = Ca(2+)(out). It carries out the reaction K(+)(in) = K(+)(out). The catalysed reaction is Na(+)(in) = Na(+)(out). Activated by a myriad of ligands such as acetylcholine, cytisine, nicotine, choline and epibatidine. Channel potentiation by calcium is stoichiometry-selective, CHRNA4:CHRNB2 nACh receptor is achieved by calcium association with topographically distinct sites framed by anionic residues within the CHRNA4 subunit and between the CHRNA4 and CHRNB2 subunits. nAChR activity is inhibited by the antagonist alpha-conotoxins BuIA, PnIA, GID and MII, small disulfide-constrained peptides from cone snails. In terms of biological role, component of neuronal acetylcholine receptors (nAChRs) that function as pentameric, ligand-gated cation channels with high calcium permeability among other activities. nAChRs are excitatory neurotrasnmitter receptors formed by a collection of nAChR subunits known to mediate synaptic transmission in the nervous system and the neuromuscular junction. Each nAchR subunit confers differential attributes to channel properties, including activation, deactivation and desensitization kinetics, pH sensitivity, cation permeability, and binding to allosteric modulators. CHRNA4 forms heteropentameric neuronal acetylcholine receptors with CHRNB2 and CHRNB4, as well as CHRNA5 and CHRNB3 as accesory subunits. Is the most abundant nAChR subtype expressed in the central nervous system. Found in two major stoichiometric forms,(CHRNA4)3:(CHRNB2)2 and (CHRNA4)2:(CHRNB2)3, the two stoichiometric forms differ in their unitary conductance, calcium permeability, ACh sensitivity and potentiation by divalent cation. Involved in the modulation of calcium-dependent signaling pathways, influences the release of neurotransmitters, including dopamine, glutamate and GABA. The protein is Neuronal acetylcholine receptor subunit alpha-4 (CHRNA4) of Gallus gallus (Chicken).